A 622-amino-acid polypeptide reads, in one-letter code: Golgin subfamily A member 6-like protein 7 (622 aa).

Disordered stretches follow at residues 1-82 (MMSE…QQAL), 251-496 (RKHE…RKQV), and 511-580 (EKMQ…HDNR). 6 stretches are compositionally biased toward basic and acidic residues: residues 57–74 (SPEDKQQNRAQLKEENKA), 251–275 (RKHEEKMWRQEQRLRDQEKELREQE), 283–332 (EQMR…KQEE), 339–367 (EQMRKQEKQMLKQKEQMRKQEEQMWKQEE), 374–388 (EQMRKQEEQMWKQEE), and 395–420 (EQMRKQEEQMWKQEEQMGEQMRKQEE). Positions 100 to 534 (KTELETALHD…EKRREKKERM (435 aa)) form a coiled coil. A compositionally biased stretch (acidic residues) spans 477-489 (QMGEQEEQMGEQE). 2 stretches are compositionally biased toward basic and acidic residues: residues 511-546 (EKMQEEEEKIRRQVEKRREKKERMGEQEKTQEERCS) and 567-580 (PAREAGKGYSHDNR).

The protein belongs to the GOLGA6 family.

This Homo sapiens (Human) protein is Golgin subfamily A member 6-like protein 7.